The sequence spans 728 residues: Microtubule-associated protein VP5 (728 aa).

This sequence belongs to the reoviridae microtubule-associated protein family.

The protein resides in the virion. It is found in the host cytoplasm. Its subcellular location is the host cytoskeleton. Functionally, minor inner capsid component. Displays NTPase and RNA 5'-triphosphatase (RTPase) activities. May function as a cofactor of polymerase. Associates with microtubules and plays a role in the formation, structural organization and morphology of viral inclusions, where the assembly of cores and the replication of viral RNA occur. The protein is Microtubule-associated protein VP5 (S5) of Aquareovirus C (isolate Golden shiner/USA/GSRV/1977) (AQRV-C).